We begin with the raw amino-acid sequence, 103 residues long: DNA-binding protein TRF1 (103 aa).

DNA-binding protein that recognizes the inverted terminal repeats of the pGKl linear DNA plasmids. This is DNA-binding protein TRF1 (TRF1) from Kluyveromyces lactis (strain ATCC 8585 / CBS 2359 / DSM 70799 / NBRC 1267 / NRRL Y-1140 / WM37) (Yeast).